We begin with the raw amino-acid sequence, 108 residues long: Nucleoid-associated protein CPS_3743 (108 aa).

Residues 87–108 (NKDKMGALTGGMQLPPGMKMPF) are disordered.

The protein belongs to the YbaB/EbfC family. In terms of assembly, homodimer.

It is found in the cytoplasm. The protein localises to the nucleoid. Its function is as follows. Binds to DNA and alters its conformation. May be involved in regulation of gene expression, nucleoid organization and DNA protection. The chain is Nucleoid-associated protein CPS_3743 from Colwellia psychrerythraea (strain 34H / ATCC BAA-681) (Vibrio psychroerythus).